Reading from the N-terminus, the 579-residue chain is ATP-dependent lipid A-core flippase (579 aa).

5 helical membrane-spanning segments follow: residues 24 to 44 (FALSIVGLILTAATEPMLPAL), 63 to 83 (WVPLLLLGLFVLRGVASFIST), 150 to 170 (VLGLLGYLVWLNWRLTLIVFA), 251 to 271 (VIQFIAAIALAIIVFIAAGQA), and 275 to 295 (TTTVGGFVAFFMAMLLLFAPL). The ABC transmembrane type-1 domain maps to 25-307 (ALSIVGLILT…LTAVNDQLQR (283 aa)). One can recognise an ABC transporter domain in the interval 339–575 (LAFRDVGLTY…QGRYAQLHAL (237 aa)). 373-380 (GASGSGKT) lines the ATP pocket.

It belongs to the ABC transporter superfamily. Lipid exporter (TC 3.A.1.106) family. As to quaternary structure, homodimer.

It localises to the cell inner membrane. The enzyme catalyses ATP + H2O + lipid A-core oligosaccharideSide 1 = ADP + phosphate + lipid A-core oligosaccharideSide 2.. Involved in lipopolysaccharide (LPS) biosynthesis. Translocates lipid A-core from the inner to the outer leaflet of the inner membrane. Transmembrane domains (TMD) form a pore in the inner membrane and the ATP-binding domain (NBD) is responsible for energy generation. The polypeptide is ATP-dependent lipid A-core flippase (Thiobacillus denitrificans (strain ATCC 25259 / T1)).